The sequence spans 131 residues: Putative gamma-taxilin 2 (131 aa).

It belongs to the taxilin family.

In Pan troglodytes (Chimpanzee), this protein is Putative gamma-taxilin 2 (TXLNGY).